The primary structure comprises 187 residues: ATP synthase subunit b, chloroplastic (187 aa).

The helical transmembrane segment at 34 to 56 (LINLAAVIGLLFYSGRSFLTNLL) threads the bilayer.

The protein belongs to the ATPase B chain family. As to quaternary structure, F-type ATPases have 2 components, F(1) - the catalytic core - and F(0) - the membrane proton channel. F(1) has five subunits: alpha(3), beta(3), gamma(1), delta(1), epsilon(1). F(0) has four main subunits: a(1), b(1), b'(1) and c(10-14). The alpha and beta chains form an alternating ring which encloses part of the gamma chain. F(1) is attached to F(0) by a central stalk formed by the gamma and epsilon chains, while a peripheral stalk is formed by the delta, b and b' chains.

The protein localises to the plastid. It localises to the chloroplast thylakoid membrane. Functionally, f(1)F(0) ATP synthase produces ATP from ADP in the presence of a proton or sodium gradient. F-type ATPases consist of two structural domains, F(1) containing the extramembraneous catalytic core and F(0) containing the membrane proton channel, linked together by a central stalk and a peripheral stalk. During catalysis, ATP synthesis in the catalytic domain of F(1) is coupled via a rotary mechanism of the central stalk subunits to proton translocation. Component of the F(0) channel, it forms part of the peripheral stalk, linking F(1) to F(0). The protein is ATP synthase subunit b, chloroplastic of Chlorokybus atmophyticus (Soil alga).